The following is a 155-amino-acid chain: Small ribosomal subunit protein uS7 (155 aa).

This sequence belongs to the universal ribosomal protein uS7 family. As to quaternary structure, part of the 30S ribosomal subunit. Contacts proteins S9 and S11.

Functionally, one of the primary rRNA binding proteins, it binds directly to 16S rRNA where it nucleates assembly of the head domain of the 30S subunit. Is located at the subunit interface close to the decoding center, probably blocks exit of the E-site tRNA. The protein is Small ribosomal subunit protein uS7 of Desulforapulum autotrophicum (strain ATCC 43914 / DSM 3382 / VKM B-1955 / HRM2) (Desulfobacterium autotrophicum).